A 71-amino-acid polypeptide reads, in one-letter code: SPbeta prophage-derived uncharacterized protein YorP (71 aa).

This chain is SPbeta prophage-derived uncharacterized protein YorP (yorP), found in Bacillus subtilis (strain 168).